A 260-amino-acid polypeptide reads, in one-letter code: Triosephosphate isomerase (260 aa).

Position 10–12 (10–12 (NWK)) interacts with substrate. His100 serves as the catalytic Electrophile. Glu172 functions as the Proton acceptor in the catalytic mechanism. Substrate contacts are provided by residues Gly178, Ser218, and 239-240 (GG).

Belongs to the triosephosphate isomerase family. Homodimer.

The protein localises to the cytoplasm. It catalyses the reaction D-glyceraldehyde 3-phosphate = dihydroxyacetone phosphate. It functions in the pathway carbohydrate biosynthesis; gluconeogenesis. The protein operates within carbohydrate degradation; glycolysis; D-glyceraldehyde 3-phosphate from glycerone phosphate: step 1/1. Involved in the gluconeogenesis. Catalyzes stereospecifically the conversion of dihydroxyacetone phosphate (DHAP) to D-glyceraldehyde-3-phosphate (G3P). The protein is Triosephosphate isomerase of Corynebacterium diphtheriae (strain ATCC 700971 / NCTC 13129 / Biotype gravis).